Consider the following 1097-residue polypeptide: RecBCD enzyme subunit RecC (1097 aa).

This sequence belongs to the RecC family. Heterotrimer of RecB, RecC and RecD. All subunits contribute to DNA-binding.

Functionally, a helicase/nuclease that prepares dsDNA breaks (DSB) for recombinational DNA repair. Binds to DSBs and unwinds DNA via a highly rapid and processive ATP-dependent bidirectional helicase activity. Holoenzyme degrades any linearized DNA that is unable to undergo homologous recombination. In the holoenzyme this subunit recognizes the wild-type Chi sequence, and when added to isolated RecB increases its ATP-dependent helicase processivity. Unlike the case in E.coli, suppresses RecA-dependent homologous recombination, is instead required for single-strand annealing pathway repair of DSB. In Mycobacterium tuberculosis (strain CDC 1551 / Oshkosh), this protein is RecBCD enzyme subunit RecC.